Here is a 142-residue protein sequence, read N- to C-terminus: Protein spalt-accessory (142 aa).

Residues 1-16 (MKLLIALFVLVNAVIA) form the signal peptide. Residues 65–77 (GQGGVSPGQGGFA) show a composition bias toward gly residues. The disordered stretch occupies residues 65–142 (GQGGVSPGQG…HHEHHGHHRH (78 aa)). Basic and acidic residues predominate over residues 112-124 (NHHEYPEHHGDHH). Residues 125–142 (REHHEHHGHHEHHGHHRH) are compositionally biased toward basic residues.

The protein localises to the secreted. Functionally, likely to be involved in the establishment of the head. This is Protein spalt-accessory (sala) from Drosophila orena (Fruit fly).